The chain runs to 176 residues: Variant surface antigen A (176 aa).

Residues 1 to 29 (MKKSIFSKKLLVSFGSLVALAAIPLIAIS) form the signal peptide. A lipid anchor (N-palmitoyl cysteine) is attached at cysteine 30. The S-diacylglycerol cysteine moiety is linked to residue cysteine 30. The interval 33-176 (TDNNSSQSQQ…TKTENTQHTS (144 aa)) is disordered. The span at 35-121 (NNSSQSQQPG…GSNSESGMNS (87 aa)) shows a compositional bias: low complexity. Repeat 1 spans residues 123-135 (KTENTQQSEAPGT). Positions 123–176 (KTENTQQSEAPGTNTGNKTTSESNSESGMNSEKTENTQQSEAPGTKTENTQHTS) are 2.5 X 13 AA repeats. Over residues 126–142 (NTQQSEAPGTNTGNKTT) the composition is skewed to polar residues. The segment covering 143-153 (SESNSESGMNS) has biased composition (low complexity). The stretch at 155 to 167 (KTENTQQSEAPGT) is repeat 2. Over residues 158–176 (NTQQSEAPGTKTENTQHTS) the composition is skewed to polar residues. The 3; truncated repeat unit spans residues 168 to 176 (KTENTQHTS).

The protein resides in the cell membrane. Functionally, responsible for the antigenic diversity for host adaptation. The chain is Variant surface antigen A (vlpA) from Mesomycoplasma hyorhinis (Mycoplasma hyorhinis).